The sequence spans 368 residues: Cytochrome b (368 aa).

Helical transmembrane passes span Phe32 to Phe52, Trp76 to Thr98, Ala112 to Val132, and Phe174 to Phe194. His82 and His96 together coordinate heme b. Residues His178 and His192 each coordinate heme b. Residue His197 coordinates a ubiquinone. Transmembrane regions (helical) follow at residues Met219–Ala239, Gly285–Leu305, Gly323–Pro343, and Tyr347–Leu367.

Belongs to the cytochrome b family. As to quaternary structure, the main subunits of complex b-c1 are: cytochrome b, cytochrome c1 and the Rieske protein. It depends on heme b as a cofactor.

It is found in the mitochondrion inner membrane. Its function is as follows. Component of the ubiquinol-cytochrome c reductase complex (complex III or cytochrome b-c1 complex) that is part of the mitochondrial respiratory chain. The b-c1 complex mediates electron transfer from ubiquinol to cytochrome c. Contributes to the generation of a proton gradient across the mitochondrial membrane that is then used for ATP synthesis. This Toxoplasma gondii protein is Cytochrome b (MT-CYB).